The sequence spans 367 residues: Terpene cyclase verU1 (367 aa).

A helical membrane pass occupies residues 8-28; that stretch reads IRCSLLLLGLVGIYTVWISSF. The N-linked (GlcNAc...) asparagine glycan is linked to Asn-50. 8 helical membrane passes run 57–77, 85–105, 120–140, 169–189, 197–217, 239–259, 292–312, and 327–347; these read FTGIDTLDKALGIFVVFYWPV, LSLIAFPAAVGVGEMWILFAL, MAMFGMGLMLVGPGIFLPIYC, CLLGGYYILVILLALPSPAVV, IIALLQGWPLLVSAMLWLTHL, ISAMACATISHLVPLLISLLA, FQWDYGLGSLALLLWAVGLHI, and LIPEALFLSVMMSPCGAAALY. Asn-352 carries N-linked (GlcNAc...) asparagine glycosylation.

It belongs to the membrane-bound ascI terpene cyclase family.

Its subcellular location is the membrane. It participates in secondary metabolite biosynthesis; terpenoid biosynthesis. The protein operates within mycotoxin biosynthesis. In terms of biological role, terpene cyclase; part of the gene cluster that mediates the biosynthesis of the neurotoxin verrucosidin, a methylated alpha-pyrone polyketide that inhibits oxidative phosphorylation in mitochondria and thereby causes neurological diseases. The carbon backbone of verrucosidin is synthesized by the HR-PKS verA, and further modified by the other verrucodidin cluster enzymes. The chain is Terpene cyclase verU1 from Penicillium polonicum.